The sequence spans 91 residues: Small ribosomal subunit protein bS20 (91 aa).

This sequence belongs to the bacterial ribosomal protein bS20 family.

In terms of biological role, binds directly to 16S ribosomal RNA. The protein is Small ribosomal subunit protein bS20 of Thermosipho melanesiensis (strain DSM 12029 / CIP 104789 / BI429).